The primary structure comprises 741 residues: Ethylene receptor 2 (741 aa).

Helical transmembrane passes span 23 to 43 (ISDF…IYFV), 53 to 73 (WVLV…LINL), and 92 to 112 (IMTA…IPDL). Cu cation-binding residues include Cys65 and His69. The region spanning 158-307 (DRHTILKTTL…VVADQVAVAL (150 aa)) is the GAF domain. One can recognise a Histidine kinase domain in the interval 350–589 (VMNHEMRTPM…TFVVKLGIPE (240 aa)). His353 carries the phosphohistidine; by autocatalysis modification. The region spanning 615–732 (KVLLLDDNGV…KMRNVLSNLL (118 aa)) is the Response regulatory domain. Residue Asp663 is modified to 4-aspartylphosphate.

Belongs to the ethylene receptor family. As to quaternary structure, homodimer; disulfide-linked. Cu cation serves as cofactor. Post-translationally, activation probably requires a transfer of a phosphate group between a His in the transmitter domain and an Asp of the receiver domain.

The protein localises to the endoplasmic reticulum membrane. It catalyses the reaction ATP + protein L-histidine = ADP + protein N-phospho-L-histidine.. May act early in the ethylene signal transduction pathway, possibly as an ethylene receptor, or as a regulator of the pathway. The polypeptide is Ethylene receptor 2 (ETR2) (Pelargonium hortorum (Common geranium)).